The following is a 119-amino-acid chain: DNA-binding protein inhibitor ID-3 (119 aa).

The bHLH domain occupies 28–80 (RGKSPSAEEPLSLLDDMNHCYSRLRELVPGVPRGTQLSQVEILQRVIDYILDL).

In terms of assembly, homodimer, and heterodimer with other HLH proteins. Interacts with COPS5 and COPS7A. Interacts with IFI204. Interacts with GATA4 and NKX2-5. Interacts with ANKRD2; both proteins cooperate in myoblast differentiation. Interacts with CLOCK and BMAL1. Phosphorylated in vitro by CDC2 and PKC.

Its subcellular location is the nucleus. Its function is as follows. Transcriptional regulator (lacking a basic DNA binding domain) which negatively regulates the basic helix-loop-helix (bHLH) transcription factors by forming heterodimers and inhibiting their DNA binding and transcriptional activity. Implicated in regulating a variety of cellular processes, including cellular growth, senescence, differentiation, apoptosis, angiogenesis, and neoplastic transformation. Involved in myogenesis by inhibiting skeletal muscle and cardiac myocyte differentiation and promoting muscle precursor cells proliferation. Inhibits the binding of E2A-containing protein complexes to muscle creatine kinase E-box enhancer. Regulates the circadian clock by repressing the transcriptional activator activity of the CLOCK-BMAL1 heterodimer. The sequence is that of DNA-binding protein inhibitor ID-3 (Id3) from Rattus norvegicus (Rat).